A 378-amino-acid chain; its full sequence is WUSCHEL-related homeobox 9 (378 aa).

2 disordered regions span residues 1–60 (MASS…NPKP) and 123–173 (KHSL…GSQM). Residues 32–42 (SASHRSSPFSS) are compositionally biased toward low complexity. Residues 45-54 (EVERSPEPKP) are compositionally biased toward basic and acidic residues. Residues 51-115 (EPKPRWNPKP…NRKSRSKHKL (65 aa)) constitute a DNA-binding region (homeobox; WUS-type). 2 stretches are compositionally biased toward low complexity: residues 137 to 152 (PSASSSSSSSSSSSKS) and 161 to 171 (KNNTNLSLGGS).

The protein belongs to the WUS homeobox family. In terms of tissue distribution, expressed in the basal cell and later at the boundary between suspensor and proembryo. Expressed at low levels in proliferating tissues post embryonically. Detected in vegetative shoot apical meristem, leaf primordia, floral meristems, emerging floral organs, epidermal layer of the placenta and in the upper portion of the root meristematic zone.

It is found in the nucleus. It localises to the cytoplasm. Its function is as follows. Homeodomain transcription factor required for meristem growth and early development. Promotes cell proliferation and prevents premature differentiation in meristematic tissues during postembryonic development. Essential for maintaining tissue growth during embryogenesis. May act by repressing TSS to promote meristematic proliferation. Involved in the transcriptional activation of a subset of cytokinin response factors. May act as a negative regulator of cytokinin signaling in the dark. The protein is WUSCHEL-related homeobox 9 of Arabidopsis thaliana (Mouse-ear cress).